We begin with the raw amino-acid sequence, 96 residues long: Large ribosomal subunit protein uL23 (96 aa).

Belongs to the universal ribosomal protein uL23 family. Part of the 50S ribosomal subunit. Contacts protein L29, and trigger factor when it is bound to the ribosome.

Functionally, one of the early assembly proteins it binds 23S rRNA. One of the proteins that surrounds the polypeptide exit tunnel on the outside of the ribosome. Forms the main docking site for trigger factor binding to the ribosome. The polypeptide is Large ribosomal subunit protein uL23 (Caldicellulosiruptor saccharolyticus (strain ATCC 43494 / DSM 8903 / Tp8T 6331)).